A 771-amino-acid chain; its full sequence is DnaJ homolog subfamily C member 16 (771 aa).

Positions 1-25 (MELKRLSISWQFLIVLVLILQSLSA) are cleaved as a signal peptide. Residues 26 to 532 (LDFDPYRVLG…ESLLHSNWRE (507 aa)) lie on the Cytoplasmic side of the membrane. Residues 29–93 (DPYRVLGVSR…EKRTNYDHYG (65 aa)) form the J domain. In terms of domain architecture, Thioredoxin spans 116-244 (FYFDESFFHF…LRQFVESLLP (129 aa)). The chain crosses the membrane as a helical; Anchor for type IV membrane protein span at residues 533-553 (MMPLLSLIFSALFILFGTVIV). Residues 554-771 (QAFSDSNEER…FYIPSWPELD (218 aa)) are Extracellular-facing. Residues 559 to 590 (SNEERESHPPDKEEVPEKAGKTEPSFTKESSS) are disordered. Basic and acidic residues predominate over residues 560 to 579 (NEERESHPPDKEEVPEKAGK). An N-linked (GlcNAc...) asparagine glycan is attached at Asn628.

It localises to the endoplasmic reticulum membrane. In terms of biological role, plays an important role in regulating the size of autophagosomes during the formation process. This Rattus norvegicus (Rat) protein is DnaJ homolog subfamily C member 16 (Dnajc16).